Consider the following 296-residue polypeptide: Fructose-bisphosphate aldolase class 1 (296 aa).

Glu-175 serves as the catalytic Proton acceptor. Lys-212 (schiff-base intermediate with dihydroxyacetone-P) is an active-site residue.

It belongs to the class I fructose-bisphosphate aldolase family.

It catalyses the reaction beta-D-fructose 1,6-bisphosphate = D-glyceraldehyde 3-phosphate + dihydroxyacetone phosphate. It functions in the pathway carbohydrate degradation; glycolysis; D-glyceraldehyde 3-phosphate and glycerone phosphate from D-glucose: step 4/4. This chain is Fructose-bisphosphate aldolase class 1, found in Staphylococcus aureus (strain Mu3 / ATCC 700698).